We begin with the raw amino-acid sequence, 185 residues long: HTH-type transcriptional repressor OpcR (185 aa).

The H-T-H motif DNA-binding region spans 49–73 (LSELSEATGMSKTRMSQVVREMIDA).

It belongs to the GbsR family.

Is not choline-responsive. In terms of biological role, negatively regulates the transcription of the opuC operon. In the absence of GbsR, is also a negative regulator of the opuB operon. Binds to an inverted repeat in the promoter region of the operons. This Bacillus subtilis (strain 168) protein is HTH-type transcriptional repressor OpcR (opcR).